Reading from the N-terminus, the 723-residue chain is Malate synthase G (723 aa).

Residues Val-118, 125–126 (RY), Ser-274, and Arg-311 each bind acetyl-CoA. Arg-338 (proton acceptor) is an active-site residue. Residues Arg-338, Glu-427, and 452 to 455 (GFLD) each bind glyoxylate. Residues Glu-427 and Asp-455 each coordinate Mg(2+). Pro-536 serves as a coordination point for acetyl-CoA. Residue Cys-617 is modified to Cysteine sulfenic acid (-SOH). Residue Asp-631 is the Proton donor of the active site. The residue at position 688 (Cys-688) is a Cysteine sulfenic acid (-SOH).

This sequence belongs to the malate synthase family. GlcB subfamily. As to quaternary structure, monomer. Mg(2+) serves as cofactor.

It is found in the cytoplasm. The enzyme catalyses glyoxylate + acetyl-CoA + H2O = (S)-malate + CoA + H(+). The protein operates within carbohydrate metabolism; glyoxylate cycle; (S)-malate from isocitrate: step 2/2. In terms of biological role, involved in the glycolate utilization. Catalyzes the condensation and subsequent hydrolysis of acetyl-coenzyme A (acetyl-CoA) and glyoxylate to form malate and CoA. The chain is Malate synthase G from Shigella flexneri.